A 366-amino-acid chain; its full sequence is Peptide chain release factor 2 (366 aa).

Gln251 is modified (N5-methylglutamine).

This sequence belongs to the prokaryotic/mitochondrial release factor family. Post-translationally, methylated by PrmC. Methylation increases the termination efficiency of RF2.

It is found in the cytoplasm. In terms of biological role, peptide chain release factor 2 directs the termination of translation in response to the peptide chain termination codons UGA and UAA. In Listeria monocytogenes serotype 4b (strain F2365), this protein is Peptide chain release factor 2 (prfB).